The primary structure comprises 79 residues: Putative Fis-like DNA-binding protein (79 aa).

The segment at residues 55-74 is a DNA-binding region (H-T-H motif); that stretch reads QSKASVMLGLNRNTLRKKLI.

It belongs to the transcriptional regulatory Fis family.

This Neisseria meningitidis serogroup A / serotype 4A (strain DSM 15465 / Z2491) protein is Putative Fis-like DNA-binding protein.